A 649-amino-acid polypeptide reads, in one-letter code: MNPNNRSEHDTIKATENNEVSNNHAQYPLADTPTLEELNYKEFLRRTTDNNVEALDSSTTKDAIQKGISIIGDLLGVVGFPYGGALVSFYTNLLNTIWPGEDPLKAFMQQVEALIDQKIADYAKDKATAELQGLKNVFKDYVSALDSWDKTPLTLRDGRSQGRIRELFSQAESHFRRSMPSFAVSGYEVLFLPTYAQAANTHLLLLKDAQIYGTDWGYSTDDLNEFHTKQKDLTIEYTNHCAKWYKAGLDKLRGSTYEEWVKFNRYRREMTLTVLDLITLFPLYDVRTYTKGVKTELTRDVLTDPIVAVNNMNGYGTTFSNIENYIRKPHLFDYLHAIQFHSRLQPGYFGTDSFNYWSGNYVSTRSSIGSDEIIRSPFYGNKSTLDVQNLEFNGEKVFRAVANGNLAVWPVGTGGTKIHSGVTKVQFSQYNDRKDEVRTQTYDSKRNVGGIVFDSIDQLPPITTDESLEKAYSHQLNYVRCFLLQGGRGIIPVFTWTHKSVDFYNTLDSEKITQIPFVKAFILVNSTSVVAGPGFTGGDIIKCTNGSGLTLYVTPAPDLTYSKTYKIRIRYASTSQVRFGIDLGSYTHSISYFDKTMDKGNTLTYNSFNLSSVSRPIEISGGNKIGVSVGGIGSGDEVYIDKIEFIPMD.

Over residues 1–13 (MNPNNRSEHDTIK) the composition is skewed to basic and acidic residues. The segment at 1–29 (MNPNNRSEHDTIKATENNEVSNNHAQYPL) is disordered. A compositionally biased stretch (polar residues) spans 14–25 (ATENNEVSNNHA).

It belongs to the delta endotoxin family.

Promotes colloidosmotic lysis by binding to the midgut epithelial cells of Coleoptera. The protein is Pesticidal crystal protein Cry3Ca (cry3Ca) of Bacillus thuringiensis subsp. kurstaki.